The chain runs to 534 residues: Dolichol kinase (534 aa).

Over 1–16 (MTRQCPPQESGAALSG) the chain is Cytoplasmic. The helical transmembrane segment at 17–37 (SVLAEAAVVFAVVLSIHAAVW) threads the bilayer. The Extracellular portion of the chain corresponds to 38 to 72 (DRYSWCAVALAVQAFYVQYKWDRLLQQGNAVFQFR). The chain crosses the membrane as a helical span at residues 73 to 93 (MSANSGLLPASMVMPLLGLVM). Over 94 to 109 (KERCQTAGNPYFERFG) the chain is Cytoplasmic. A helical membrane pass occupies residues 110–130 (IVVAATGMAVALFSSVLALGI). The Extracellular segment spans residues 131-132 (TR). Residues 133-153 (PVPTNTCAISGLAGGVIIYIM) traverse the membrane as a helical segment. At 154–161 (RHSLSVGE) the chain is on the cytoplasmic side. Residues 162-182 (VIEVLEVLLIFVYLNMILLYL) form a helical membrane-spanning segment. Residues 183–186 (LPRC) lie on the Extracellular side of the membrane. The helical transmembrane segment at 187-207 (FTPGEALLVLGGISFVLNQLI) threads the bilayer. Residues 208 to 220 (KRSLTESQGDPVD) lie on the Cytoplasmic side of the membrane. The helical transmembrane segment at 221-241 (FFLLVVVVGMVLMGVFFSTLF) threads the bilayer. Residues 242–252 (VFMDSGTWASS) are Extracellular-facing. Residues 253–273 (IFFHLMTCVLGLGVVLPWLHW) form a helical membrane-spanning segment. The Cytoplasmic portion of the chain corresponds to 274–293 (LIRRNPLLWLLQFLFYTETR). Residues 294–314 (IYLLAYWSLLASVACLVVLYQ) traverse the membrane as a helical segment. At 315–333 (NAKRSSSESKKHRAPTITR) the chain is on the extracellular side. The helical transmembrane segment at 334–350 (KYFHFIVVATYIPGIIF) threads the bilayer. Residues 351-355 (DRPLL) lie on the Cytoplasmic side of the membrane. A helical membrane pass occupies residues 356-376 (YVAATVCLAVFIFLEYVRYFR). The Extracellular portion of the chain corresponds to 377 to 397 (IKPLGHTLRSLLSLFLDERDS). Residues 398-418 (GPLILTHIYLLLGMSLPIWLI) traverse the membrane as a helical segment. Over 419–432 (PRPCTQKDSLEGAR) the chain is Cytoplasmic. Residues 433 to 453 (ALVPYAGVLAVGVGDTVASIF) form a helical membrane-spanning segment. At 454–468 (GSTMGEIRWPGTKKT) the chain is on the extracellular side. Positions 455 to 470 (STMGEIRWPGTKKTFE) are CTP-binding. Residues 469-489 (FEGTMTSIFAQIISVALILIF) form a helical membrane-spanning segment. The Cytoplasmic portion of the chain corresponds to 490–491 (DS). The chain crosses the membrane as a helical span at residues 492-512 (GVDLNYSYAWILGSISTVSLL). The Extracellular segment spans residues 513–534 (EAYTTQIDNLLLPLYLLILLMA).

It belongs to the polyprenol kinase family.

It is found in the endoplasmic reticulum membrane. The catalysed reaction is a di-trans,poly-cis-dolichol + CTP = a di-trans,poly-cis-dolichyl phosphate + CDP + H(+). It participates in protein modification; protein glycosylation. Functionally, catalyzes CTP-mediated phosphorylation of dolichol, the terminal step in de novo dolichyl monophosphate (Dol-P) biosynthesis. Dol-P is a lipid carrier essential for the synthesis of N-linked and O-linked oligosaccharides and for GPI anchors. The polypeptide is Dolichol kinase (Mus musculus (Mouse)).